The primary structure comprises 908 residues: NADH-quinone oxidoreductase subunit G (908 aa).

One can recognise a 2Fe-2S ferredoxin-type domain in the interval 2 to 83; it reads ATIHVDGKEY…GTFISIDDEE (82 aa). Cysteine 34, cysteine 45, cysteine 48, and cysteine 67 together coordinate [2Fe-2S] cluster. The region spanning 83–122 is the 4Fe-4S His(Cys)3-ligated-type domain; the sequence is EAKQFRESVVEWLMTNHPHDCPVCEEGGNCHLQDMTVMTG. Residues histidine 99, cysteine 103, cysteine 106, cysteine 112, cysteine 151, cysteine 154, cysteine 157, cysteine 201, cysteine 228, cysteine 231, cysteine 235, and cysteine 263 each contribute to the [4Fe-4S] cluster site. Positions 221–277 constitute a 4Fe-4S Mo/W bis-MGD-type domain; the sequence is MQFAPSICQQCSIGCNISPGERYGELRRIENRYNGTVNHYFLCDRGRFGYGYVNLKD.

This sequence belongs to the complex I 75 kDa subunit family. As to quaternary structure, composed of 13 different subunits. Subunits NuoCD, E, F, and G constitute the peripheral sector of the complex. It depends on [2Fe-2S] cluster as a cofactor. [4Fe-4S] cluster is required as a cofactor.

The catalysed reaction is a quinone + NADH + 5 H(+)(in) = a quinol + NAD(+) + 4 H(+)(out). Functionally, NDH-1 shuttles electrons from NADH, via FMN and iron-sulfur (Fe-S) centers, to quinones in the respiratory chain. The immediate electron acceptor for the enzyme in this species is believed to be ubiquinone. Couples the redox reaction to proton translocation (for every two electrons transferred, four hydrogen ions are translocated across the cytoplasmic membrane), and thus conserves the redox energy in a proton gradient. This is NADH-quinone oxidoreductase subunit G (nuoG) from Escherichia coli O6:H1 (strain CFT073 / ATCC 700928 / UPEC).